The primary structure comprises 388 residues: Succinate--CoA ligase [ADP-forming] subunit beta (388 aa).

In terms of domain architecture, ATP-grasp spans 9–244 (KQLFAEYGLP…PSQDDPREAH (236 aa)). Residues lysine 46, 53–55 (GRG), glutamate 99, threonine 102, and glutamate 107 contribute to the ATP site. Asparagine 199 and aspartate 213 together coordinate Mg(2+). Residues asparagine 264 and 321–323 (GIV) each bind substrate.

Belongs to the succinate/malate CoA ligase beta subunit family. In terms of assembly, heterotetramer of two alpha and two beta subunits. Mg(2+) serves as cofactor.

The catalysed reaction is succinate + ATP + CoA = succinyl-CoA + ADP + phosphate. It carries out the reaction GTP + succinate + CoA = succinyl-CoA + GDP + phosphate. The protein operates within carbohydrate metabolism; tricarboxylic acid cycle; succinate from succinyl-CoA (ligase route): step 1/1. Its function is as follows. Succinyl-CoA synthetase functions in the citric acid cycle (TCA), coupling the hydrolysis of succinyl-CoA to the synthesis of either ATP or GTP and thus represents the only step of substrate-level phosphorylation in the TCA. The beta subunit provides nucleotide specificity of the enzyme and binds the substrate succinate, while the binding sites for coenzyme A and phosphate are found in the alpha subunit. This chain is Succinate--CoA ligase [ADP-forming] subunit beta, found in Pseudomonas syringae pv. tomato (strain ATCC BAA-871 / DC3000).